A 97-amino-acid chain; its full sequence is U6-theraphotoxin-Hhn1a 3 (97 aa).

The first 33 residues, 1 to 33 (MLIKQFSRRSKNTKVQILLAFAALFVLAVGSYA), serve as a signal peptide directing secretion. The propeptide occupies 34–61 (SESKKLDLRDALFSAMFSADYQLNPQER). 3 disulfides stabilise this stretch: C63-C77, C70-C82, and C76-C89.

It belongs to the neurotoxin 10 (Hwtx-1) family. 12 (Hntx-12) subfamily. As to expression, expressed by the venom gland.

The protein resides in the secreted. Its function is as follows. Ion channel inhibitor. The polypeptide is U6-theraphotoxin-Hhn1a 3 (Cyriopagopus hainanus (Chinese bird spider)).